We begin with the raw amino-acid sequence, 417 residues long: Secernin-3 (417 aa).

Positions 1 to 5 (MYPRS) are excised as a propeptide. Cysteine 6 is an active-site residue. Position 6 is a glyoxylic acid (Cys); alternate (cysteine 6). Cysteine 6 is subject to Pyruvic acid (Cys); alternate.

The protein belongs to the peptidase C69 family. Secernin subfamily.

Its function is as follows. Plays a role in thermal nociception. The protein is Secernin-3 (scrn3) of Danio rerio (Zebrafish).